Reading from the N-terminus, the 306-residue chain is Beta-lactamase 1 (306 aa).

The N-terminal stretch at 1-43 (MKNKRMLKIGMCVGILGLSVTSLEAFTGGALQVEAKEKTGQVK) is a signal peptide. Catalysis depends on serine 89, which acts as the Acyl-ester intermediate. Glutamate 185 acts as the Proton acceptor in catalysis. Position 251–253 (251–253 (KSG)) interacts with substrate.

Belongs to the class-A beta-lactamase family.

The catalysed reaction is a beta-lactam + H2O = a substituted beta-amino acid. Its function is as follows. This protein is a beta-lactamase with a substrate specificity for penicillins. This is Beta-lactamase 1 (blaCI) from Bacillus mycoides.